A 200-amino-acid polypeptide reads, in one-letter code: MELQVVGANALTVSETTFGREFNEALIHQVVVAYAAGARQGSRAQKTRAEVSGSGKKPWRQKGTGRARSGDIKSPIWRSGGVTFAAKPQDHSQKVNKKMYRGAIKSILSELVRQDRLVVVEKFEIDAPKTKVLVQKLKDMALTDALIITASLDENLFLAARNLYKVDVRDVQAIDPVSLIAFDKVVVTVDAVKQIEEMFA.

The disordered stretch occupies residues 43 to 71 (RAQKTRAEVSGSGKKPWRQKGTGRARSGD).

It belongs to the universal ribosomal protein uL4 family. Part of the 50S ribosomal subunit.

Its function is as follows. One of the primary rRNA binding proteins, this protein initially binds near the 5'-end of the 23S rRNA. It is important during the early stages of 50S assembly. It makes multiple contacts with different domains of the 23S rRNA in the assembled 50S subunit and ribosome. Functionally, forms part of the polypeptide exit tunnel. This Histophilus somni (strain 129Pt) (Haemophilus somnus) protein is Large ribosomal subunit protein uL4.